We begin with the raw amino-acid sequence, 186 residues long: Peptidyl-tRNA hydrolase (186 aa).

Y16 contacts tRNA. H21 functions as the Proton acceptor in the catalytic mechanism. TRNA contacts are provided by Y66, N68, and N114.

Belongs to the PTH family. As to quaternary structure, monomer.

The protein localises to the cytoplasm. The catalysed reaction is an N-acyl-L-alpha-aminoacyl-tRNA + H2O = an N-acyl-L-amino acid + a tRNA + H(+). Its function is as follows. Hydrolyzes ribosome-free peptidyl-tRNAs (with 1 or more amino acids incorporated), which drop off the ribosome during protein synthesis, or as a result of ribosome stalling. In terms of biological role, catalyzes the release of premature peptidyl moieties from peptidyl-tRNA molecules trapped in stalled 50S ribosomal subunits, and thus maintains levels of free tRNAs and 50S ribosomes. This chain is Peptidyl-tRNA hydrolase, found in Ureaplasma parvum serovar 3 (strain ATCC 700970).